The following is a 153-amino-acid chain: uncharacterized protein (153 aa).

Residues 17 to 78 are disordered; sequence IYIHTPHPHP…HTTLSNLSLN (62 aa). Residues 22 to 38 show a composition bias toward basic residues; the sequence is PHPHPHPHPHTPTHTHP.

This is an uncharacterized protein from Saccharomyces cerevisiae (strain ATCC 204508 / S288c) (Baker's yeast).